Here is a 960-residue protein sequence, read N- to C-terminus: Valine--tRNA ligase (960 aa).

The 'HIGH' region motif lies at 42 to 52 (PNITGNLHMGH). A 'KMSKS' region motif is present at residues 553 to 557 (KMSKS). K556 serves as a coordination point for ATP. A coiled-coil region spans residues 879 to 950 (VLKAIDKEIE…LSQQLESLHD (72 aa)).

It belongs to the class-I aminoacyl-tRNA synthetase family. ValS type 1 subfamily. Monomer.

The protein resides in the cytoplasm. The catalysed reaction is tRNA(Val) + L-valine + ATP = L-valyl-tRNA(Val) + AMP + diphosphate. In terms of biological role, catalyzes the attachment of valine to tRNA(Val). As ValRS can inadvertently accommodate and process structurally similar amino acids such as threonine, to avoid such errors, it has a 'posttransfer' editing activity that hydrolyzes mischarged Thr-tRNA(Val) in a tRNA-dependent manner. The protein is Valine--tRNA ligase of Buchnera aphidicola subsp. Schizaphis graminum (strain Sg).